Consider the following 96-residue polypeptide: 2Fe-2S ferredoxin-5 (96 aa).

One can recognise a 2Fe-2S ferredoxin-type domain in the interval 2–96; the sequence is PKVIVANINA…GKGDVVIYLP (95 aa). Cysteine 36, cysteine 42, cysteine 45, and cysteine 81 together coordinate [2Fe-2S] cluster.

This sequence belongs to the adrenodoxin/putidaredoxin family. Requires [2Fe-2S] cluster as cofactor.

May be involved in the assembly of iron-sulfur clusters (Isc-Fd). The chain is 2Fe-2S ferredoxin-5 (fdx5) from Aquifex aeolicus (strain VF5).